The chain runs to 224 residues: UPF0758 protein lwe1562 (224 aa).

Positions 102 to 224 constitute an MPN domain; that stretch reads VIRCPDDAVK…YISLKEKGYF (123 aa). 3 residues coordinate Zn(2+): histidine 173, histidine 175, and aspartate 186. The JAMM motif signature appears at 173-186; sequence HNHPSGDPTPSSED.

Belongs to the UPF0758 family.

In Listeria welshimeri serovar 6b (strain ATCC 35897 / DSM 20650 / CCUG 15529 / CIP 8149 / NCTC 11857 / SLCC 5334 / V8), this protein is UPF0758 protein lwe1562.